The sequence spans 159 residues: Cyclic pyranopterin monophosphate synthase (159 aa).

Substrate is bound by residues 75-77 and 113-114; these read LCH and ME. Aspartate 128 is an active-site residue.

The protein belongs to the MoaC family. Homohexamer; trimer of dimers.

The enzyme catalyses (8S)-3',8-cyclo-7,8-dihydroguanosine 5'-triphosphate = cyclic pyranopterin phosphate + diphosphate. It functions in the pathway cofactor biosynthesis; molybdopterin biosynthesis. Functionally, catalyzes the conversion of (8S)-3',8-cyclo-7,8-dihydroguanosine 5'-triphosphate to cyclic pyranopterin monophosphate (cPMP). This Cupriavidus necator (strain ATCC 17699 / DSM 428 / KCTC 22496 / NCIMB 10442 / H16 / Stanier 337) (Ralstonia eutropha) protein is Cyclic pyranopterin monophosphate synthase.